Here is a 108-residue protein sequence, read N- to C-terminus: Structural protein 1 (108 aa).

The tract at residues 1-20 (MSRVSEYGVPEGVRESDSDT) is disordered. Residues 1–77 (MSRVSEYGVP…LKMQMDRLCN (77 aa)) are Intravirion-facing. The helical; Signal-anchor for type II membrane protein transmembrane segment at 78–98 (VLGVVLQMATLALVTYIAFVV) threads the bilayer. The Virion surface segment spans residues 99 to 108 (HTRATSCKRE).

Belongs to the varicellovirus ORF1 protein family. As to quaternary structure, homodimer. Phosphorylated.

The protein resides in the virion membrane. Its subcellular location is the host Golgi apparatus membrane. This is Structural protein 1 from Varicella-zoster virus (strain Dumas) (HHV-3).